A 172-amino-acid polypeptide reads, in one-letter code: Acetolactate synthase small subunit (172 aa).

The ACT domain occupies 4 to 78 (TLSVLVEDEA…NILKVDNITE (75 aa)).

The protein belongs to the acetolactate synthase small subunit family. In terms of assembly, dimer of large and small chains.

The protein resides in the plastid. Its subcellular location is the chloroplast. The catalysed reaction is 2 pyruvate + H(+) = (2S)-2-acetolactate + CO2. It functions in the pathway amino-acid biosynthesis; L-isoleucine biosynthesis; L-isoleucine from 2-oxobutanoate: step 1/4. The protein operates within amino-acid biosynthesis; L-valine biosynthesis; L-valine from pyruvate: step 1/4. In Cyanidium caldarium (Red alga), this protein is Acetolactate synthase small subunit (ilvH).